An 83-amino-acid polypeptide reads, in one-letter code: Sec-independent protein translocase protein TatA (83 aa).

A helical membrane pass occupies residues 1 to 21; sequence MGSLSPWHWAILAVVVIVLFG. A disordered region spans residues 48–83; it reads NENKAEASIETPTPVQSQRVDPSAASGQDSTEARPA. The span at 57–77 shows a compositional bias: polar residues; the sequence is ETPTPVQSQRVDPSAASGQDS.

Belongs to the TatA/E family. In terms of assembly, the Tat system comprises two distinct complexes: a TatABC complex, containing multiple copies of TatA, TatB and TatC subunits, and a separate TatA complex, containing only TatA subunits. Substrates initially bind to the TatABC complex, which probably triggers association of the separate TatA complex to form the active translocon.

The protein localises to the cell membrane. Its function is as follows. Part of the twin-arginine translocation (Tat) system that transports large folded proteins containing a characteristic twin-arginine motif in their signal peptide across membranes. TatA could form the protein-conducting channel of the Tat system. This chain is Sec-independent protein translocase protein TatA, found in Mycobacterium bovis (strain BCG / Pasteur 1173P2).